The following is a 383-amino-acid chain: 1-deoxy-D-xylulose 5-phosphate reductoisomerase (383 aa).

NADPH contacts are provided by Thr-10, Gly-11, Ser-12, Ile-13, Gly-36, Arg-37, Asn-38, and Asn-122. Residue Lys-123 participates in 1-deoxy-D-xylulose 5-phosphate binding. Glu-124 lines the NADPH pocket. Asp-148 serves as a coordination point for Mn(2+). Positions 149, 150, 174, and 197 each coordinate 1-deoxy-D-xylulose 5-phosphate. Glu-150 lines the Mn(2+) pocket. An NADPH-binding site is contributed by Gly-203. Residues Ser-210, Asn-215, Lys-216, and Glu-219 each contribute to the 1-deoxy-D-xylulose 5-phosphate site. Glu-219 contacts Mn(2+).

Belongs to the DXR family. Mg(2+) serves as cofactor. The cofactor is Mn(2+).

It carries out the reaction 2-C-methyl-D-erythritol 4-phosphate + NADP(+) = 1-deoxy-D-xylulose 5-phosphate + NADPH + H(+). It participates in isoprenoid biosynthesis; isopentenyl diphosphate biosynthesis via DXP pathway; isopentenyl diphosphate from 1-deoxy-D-xylulose 5-phosphate: step 1/6. Catalyzes the NADPH-dependent rearrangement and reduction of 1-deoxy-D-xylulose-5-phosphate (DXP) to 2-C-methyl-D-erythritol 4-phosphate (MEP). In Bacillus subtilis (strain 168), this protein is 1-deoxy-D-xylulose 5-phosphate reductoisomerase.